The primary structure comprises 290 residues: 7-methylguanosine phosphate-specific 5'-nucleotidase A (290 aa).

Aspartate 39 serves as the catalytic Nucleophile. The Mg(2+) site is built by aspartate 39 and aspartate 41. The active-site Proton donor is aspartate 41. Position 86 (glutamate 86) interacts with CMP. A N(7)-methyl-GMP-binding site is contributed by glutamate 86. Residues 154-155 and lysine 203 each bind substrate; that span reads SA. Residue aspartate 228 participates in Mg(2+) binding.

This sequence belongs to the pyrimidine 5'-nucleotidase family. As to quaternary structure, monomer.

It localises to the cytoplasm. The catalysed reaction is N(7)-methyl-GMP + H2O = N(7)-methylguanosine + phosphate. The enzyme catalyses CMP + H2O = cytidine + phosphate. It carries out the reaction a ribonucleoside 5'-phosphate + H2O = a ribonucleoside + phosphate. Its function is as follows. Specifically hydrolyzes 7-methylguanosine monophosphate (m(7)GMP) to 7-methylguanosine and inorganic phosphate. The specific activity for m(7)GMP may protect cells against undesired salvage of m(7)GMP and its incorporation into nucleic acids. Also has weak activity for CMP. UMP and purine nucleotides are poor substrates. The polypeptide is 7-methylguanosine phosphate-specific 5'-nucleotidase A (Nt5c3b-a) (Xenopus laevis (African clawed frog)).